Reading from the N-terminus, the 199-residue chain is Securin (199 aa).

Disordered regions lie at residues 1-23 (MATLIFVDKDNEEPGSRLASKDG) and 58-108 (RKAL…DDAY). The residue at position 2 (alanine 2) is an N-acetylalanine. Over residues 7–23 (VDKDNEEPGSRLASKDG) the composition is skewed to basic and acidic residues. The short motif at 58-61 (RKAL) is the D-box element. Positions 68-70 (TEK) match the TEK-box 1 motif. Residues 76-85 (KPLQSKQPTL) are compositionally biased toward polar residues. The short motif at 91 to 93 (TEK) is the TEK-box 2 element. A Phosphoserine modification is found at serine 162. The SH3-binding motif lies at 179–192 (PPSALSALDVELPP).

It belongs to the securin family. As to quaternary structure, interacts with the caspase-like ESPL1, and prevents its protease activity by covering its active site. Interacts with p53/TP53 and blocks its activity probably by blocking its binding to DNA. Interacts with the Ku 70 kDa subunit of ds-DNA kinase. Interacts with PTTG1IP. Interacts with RPS10 and DNAJA1. Phosphorylated at Ser-162 by CDK1 during mitosis. Post-translationally, phosphorylated in vitro by ds-DNA kinase. In terms of processing, ubiquitinated through 'Lys-11' linkage of ubiquitin moieties by the anaphase promoting complex (APC) at the onset of anaphase, conducting to its degradation. 'Lys-11'-linked ubiquitination is mediated by the E2 ligase UBE2C/UBCH10. Expressed at low level in most tissues, except in adult testis, where it is highly expressed. Expressed in both spermatocytes and spermatids.

The protein localises to the cytoplasm. Its subcellular location is the nucleus. In terms of biological role, regulatory protein, which plays a central role in chromosome stability, in the p53/TP53 pathway, and DNA repair. Probably acts by blocking the action of key proteins. During the mitosis, it blocks Separase/ESPL1 function, preventing the proteolysis of the cohesin complex and the subsequent segregation of the chromosomes. At the onset of anaphase, it is ubiquitinated, conducting to its destruction and to the liberation of ESPL1. Its function is however not limited to a blocking activity, since it is required to activate ESPL1. Negatively regulates the transcriptional activity and related apoptosis activity of p53/TP53. The negative regulation of p53/TP53 may explain the strong transforming capability of the protein when it is overexpressed. May also play a role in DNA repair via its interaction with Ku, possibly by connecting DNA damage-response pathways with sister chromatid separation. The protein is Securin (Pttg1) of Rattus norvegicus (Rat).